A 159-amino-acid polypeptide reads, in one-letter code: uncharacterized protein (159 aa).

The segment covering 1–13 (MESRPSGRQHASE) has biased composition (basic and acidic residues). Residues 1 to 35 (MESRPSGRQHASEGDGDQSPTQCAGMRSSGRSDQP) form a disordered region.

This is an uncharacterized protein from Homo sapiens (Human).